Reading from the N-terminus, the 457-residue chain is Argininosuccinate lyase (457 aa).

It belongs to the lyase 1 family. Argininosuccinate lyase subfamily.

The protein resides in the cytoplasm. It catalyses the reaction 2-(N(omega)-L-arginino)succinate = fumarate + L-arginine. It participates in amino-acid biosynthesis; L-arginine biosynthesis; L-arginine from L-ornithine and carbamoyl phosphate: step 3/3. In Exiguobacterium sibiricum (strain DSM 17290 / CCUG 55495 / CIP 109462 / JCM 13490 / 255-15), this protein is Argininosuccinate lyase.